Here is a 241-residue protein sequence, read N- to C-terminus: DNA repair protein RecO (241 aa).

It belongs to the RecO family.

In terms of biological role, involved in DNA repair and RecF pathway recombination. The polypeptide is DNA repair protein RecO (Dinoroseobacter shibae (strain DSM 16493 / NCIMB 14021 / DFL 12)).